We begin with the raw amino-acid sequence, 507 residues long: GMP synthase [glutamine-hydrolyzing] (507 aa).

Residues 9–202 (TILIIDFGSQ…VHRIVGVKPG (194 aa)) enclose the Glutamine amidotransferase type-1 domain. Cysteine 86 serves as the catalytic Nucleophile. Residues histidine 176 and glutamate 178 contribute to the active site. In terms of domain architecture, GMPS ATP-PPase spans 203–395 (WTMGAYREQA…LGLPDSFIGR (193 aa)). 230–236 (SGGVDSS) is a binding site for ATP.

In terms of assembly, homodimer.

The catalysed reaction is XMP + L-glutamine + ATP + H2O = GMP + L-glutamate + AMP + diphosphate + 2 H(+). Its pathway is purine metabolism; GMP biosynthesis; GMP from XMP (L-Gln route): step 1/1. Catalyzes the synthesis of GMP from XMP. This Brucella melitensis biotype 1 (strain ATCC 23456 / CCUG 17765 / NCTC 10094 / 16M) protein is GMP synthase [glutamine-hydrolyzing].